The sequence spans 106 residues: Iron-sulfur cluster assembly protein CyaY (106 aa).

Belongs to the frataxin family.

In terms of biological role, involved in iron-sulfur (Fe-S) cluster assembly. May act as a regulator of Fe-S biogenesis. The protein is Iron-sulfur cluster assembly protein CyaY of Klebsiella pneumoniae subsp. pneumoniae (strain ATCC 700721 / MGH 78578).